The sequence spans 314 residues: Olfactory receptor 5P67 (314 aa).

Residues Met1–Val28 are Extracellular-facing. N-linked (GlcNAc...) asparagine glycosylation occurs at Asn8. Residues Ile29 to Ile49 traverse the membrane as a helical segment. Residues Leu50 to Gln57 are Cytoplasmic-facing. Residues Leu58 to Ser78 traverse the membrane as a helical segment. Over Ser79–Ile102 the chain is Extracellular. Cys100 and Cys192 are joined by a disulfide. Residues Gln103–Tyr123 traverse the membrane as a helical segment. Topologically, residues Asp124 to Ser136 are cytoplasmic. The chain crosses the membrane as a helical span at residues Thr137–Leu157. At Asn158–Val199 the chain is on the extracellular side. The helical transmembrane segment at Val200–Ser220 threads the bilayer. Topologically, residues Tyr221–Ala240 are cytoplasmic. The chain crosses the membrane as a helical span at residues Phe241–Ile261. Topologically, residues Tyr262–Asn274 are extracellular. N-linked (GlcNAc...) asparagine glycosylation occurs at Asn268. Residues Lys275–Leu295 traverse the membrane as a helical segment. The Cytoplasmic segment spans residues Arg296 to Ser314.

Belongs to the G-protein coupled receptor 1 family.

The protein resides in the cell membrane. In terms of biological role, potential odorant receptor. This chain is Olfactory receptor 5P67, found in Mus musculus (Mouse).